The following is a 484-amino-acid chain: Threonine synthase-like 2 (484 aa).

K113 is modified (N6-(pyridoxal phosphate)lysine).

The protein belongs to the threonine synthase family. The cofactor is pyridoxal 5'-phosphate.

In terms of biological role, acts as a catabolic phospho-lyase on both gamma- and beta-phosphorylated substrates. Degrades O-phospho-threonine (PThr) to alpha-ketobutyrate, ammonia and phosphate. In Pongo abelii (Sumatran orangutan), this protein is Threonine synthase-like 2 (THNSL2).